We begin with the raw amino-acid sequence, 304 residues long: UDP-N-acetylenolpyruvoylglucosamine reductase (304 aa).

The FAD-binding PCMH-type domain occupies 28-193 (KTGGPADYLA…LTATFALTPG (166 aa)). The active site involves Arg-172. Ser-222 functions as the Proton donor in the catalytic mechanism. Glu-292 is a catalytic residue.

It belongs to the MurB family. The cofactor is FAD.

It localises to the cytoplasm. It carries out the reaction UDP-N-acetyl-alpha-D-muramate + NADP(+) = UDP-N-acetyl-3-O-(1-carboxyvinyl)-alpha-D-glucosamine + NADPH + H(+). The protein operates within cell wall biogenesis; peptidoglycan biosynthesis. In terms of biological role, cell wall formation. This is UDP-N-acetylenolpyruvoylglucosamine reductase from Levilactobacillus brevis (strain ATCC 367 / BCRC 12310 / CIP 105137 / JCM 1170 / LMG 11437 / NCIMB 947 / NCTC 947) (Lactobacillus brevis).